The primary structure comprises 434 residues: Rubisco accumulation factor 1.1, chloroplastic (434 aa).

The transit peptide at 1–51 directs the protein to the chloroplast; that stretch reads MLSLTATTLSSSIFTQSKTHGFFNTRPVYRKPFTTITSALIPASNRQAPPK. The N-terminal alpha-helix stretch occupies residues 65 to 254; the sequence is IPPKFRSLDT…KAKKAVLREL (190 aa). The interval 273 to 419 is C-terminal beta sheet; sequence VPVVRLRFGE…GMVVLVVRPP (147 aa).

Belongs to the RAF family. In terms of assembly, homodimer.

It localises to the plastid. The protein localises to the chloroplast. Its function is as follows. Required for assembly or stability of RuBisCO. Acts at a postchaperonin step to fold and/or assemble the large subunit (rbcL) into RuBisCO. RAF1 binds first to a rbcL dimer (rbcL(2)), leading to a rbcL(8)-RAF1(4) complex formation. In the next step, RBCS displaces RAF1, thus resulting in holoenzyme formation. In Arabidopsis thaliana (Mouse-ear cress), this protein is Rubisco accumulation factor 1.1, chloroplastic.